A 140-amino-acid chain; its full sequence is Large ribosomal subunit protein uL11 (140 aa).

The protein belongs to the universal ribosomal protein uL11 family. In terms of assembly, part of the ribosomal stalk of the 50S ribosomal subunit. Interacts with L10 and the large rRNA to form the base of the stalk. L10 forms an elongated spine to which L12 dimers bind in a sequential fashion forming a multimeric L10(L12)X complex. In terms of processing, one or more lysine residues are methylated.

Forms part of the ribosomal stalk which helps the ribosome interact with GTP-bound translation factors. In Staphylococcus carnosus (strain TM300), this protein is Large ribosomal subunit protein uL11.